The primary structure comprises 452 residues: Phosphoglucosamine mutase (452 aa).

Residue Ser-97 is the Phosphoserine intermediate of the active site. Ser-97, Asp-236, Asp-238, and Asp-240 together coordinate Mg(2+). Position 97 is a phosphoserine (Ser-97).

It belongs to the phosphohexose mutase family. It depends on Mg(2+) as a cofactor. In terms of processing, activated by phosphorylation.

The enzyme catalyses alpha-D-glucosamine 1-phosphate = D-glucosamine 6-phosphate. Functionally, catalyzes the conversion of glucosamine-6-phosphate to glucosamine-1-phosphate. The polypeptide is Phosphoglucosamine mutase (Prochlorococcus marinus (strain MIT 9515)).